The chain runs to 262 residues: uncharacterized protein (262 aa).

Disordered stretches follow at residues 1-30 (MGKKKFIENEDGTTEVQETESEAPKDKKEK) and 232-262 (EEEEVEDEADEETDVKEKVKEEEDEDEDMEE). Composition is skewed to acidic residues over residues 9 to 21 (NEDGTTEVQETES), 232 to 245 (EEEEVEDEADEETD), and 253 to 262 (EEDEDEDMEE).

This is an uncharacterized protein from Caenorhabditis elegans.